The chain runs to 68 residues: Large ribosomal subunit protein bL33c (68 aa).

This sequence belongs to the bacterial ribosomal protein bL33 family.

Its subcellular location is the plastid. It is found in the chloroplast. The polypeptide is Large ribosomal subunit protein bL33c (Piper cenocladum (Ant piper)).